The sequence spans 100 residues: Acylphosphatase (100 aa).

Residues 3 to 92 form the Acylphosphatase-like domain; that stretch reads RRSYSVIGRV…PLPDTFDIRF (90 aa). Catalysis depends on residues arginine 18 and asparagine 36. The disordered stretch occupies residues 76–100; the sequence is DDPAHEGPLPDTFDIRFRAPGSASE.

The protein belongs to the acylphosphatase family.

It catalyses the reaction an acyl phosphate + H2O = a carboxylate + phosphate + H(+). This is Acylphosphatase (acyP) from Nitratidesulfovibrio vulgaris (strain ATCC 29579 / DSM 644 / CCUG 34227 / NCIMB 8303 / VKM B-1760 / Hildenborough) (Desulfovibrio vulgaris).